A 224-amino-acid chain; its full sequence is UPF0758 protein PM1152 (224 aa).

In terms of domain architecture, MPN spans 102-224 (AFKNSENVRF…YYSFAENRLL (123 aa)). Zn(2+) is bound by residues His-173, His-175, and Asp-186. The JAMM motif motif lies at 173–186 (HNHPSGNPEPSASD).

The protein belongs to the UPF0758 family.

The polypeptide is UPF0758 protein PM1152 (Pasteurella multocida (strain Pm70)).